Here is a 309-residue protein sequence, read N- to C-terminus: Lipoyl synthase (309 aa).

Cysteine 56, cysteine 61, cysteine 67, cysteine 82, cysteine 86, cysteine 89, and serine 296 together coordinate [4Fe-4S] cluster. In terms of domain architecture, Radical SAM core spans 68-285; sequence FKRGTATFMI…RVAGLKMGFS (218 aa).

Belongs to the radical SAM superfamily. Lipoyl synthase family. The cofactor is [4Fe-4S] cluster.

It localises to the cytoplasm. It catalyses the reaction [[Fe-S] cluster scaffold protein carrying a second [4Fe-4S](2+) cluster] + N(6)-octanoyl-L-lysyl-[protein] + 2 oxidized [2Fe-2S]-[ferredoxin] + 2 S-adenosyl-L-methionine + 4 H(+) = [[Fe-S] cluster scaffold protein] + N(6)-[(R)-dihydrolipoyl]-L-lysyl-[protein] + 4 Fe(3+) + 2 hydrogen sulfide + 2 5'-deoxyadenosine + 2 L-methionine + 2 reduced [2Fe-2S]-[ferredoxin]. The protein operates within protein modification; protein lipoylation via endogenous pathway; protein N(6)-(lipoyl)lysine from octanoyl-[acyl-carrier-protein]: step 2/2. Functionally, catalyzes the radical-mediated insertion of two sulfur atoms into the C-6 and C-8 positions of the octanoyl moiety bound to the lipoyl domains of lipoate-dependent enzymes, thereby converting the octanoylated domains into lipoylated derivatives. The chain is Lipoyl synthase from Syntrophotalea carbinolica (strain DSM 2380 / NBRC 103641 / GraBd1) (Pelobacter carbinolicus).